A 245-amino-acid chain; its full sequence is LOB domain-containing protein 16 (245 aa).

In terms of domain architecture, LOB spans 14–116 (SPCGACKFLR…SQVMQMKAQI (103 aa)). Residues 162–183 (YYGHVNPNNPVSPQSSLEESFS) are disordered.

It belongs to the LOB domain-containing protein family. As to quaternary structure, homodimer and heterodimer with LBD18. Expressed in roots and faintly in shoots.

Its subcellular location is the nucleus. In terms of biological role, transcriptional activator. Involved in lateral root formation. Regulated by the transcriptional activators ARF7 and ARF19. Functions in the initiation and emergence of lateral roots, in conjunction with LBD18, downstream of ARF7 and ARF19. Acts downstream of the auxin influx carriers AUX1 and LAX1 in the regulation of lateral root initiation and development. This chain is LOB domain-containing protein 16 (LBD16), found in Arabidopsis thaliana (Mouse-ear cress).